Reading from the N-terminus, the 234-residue chain is OVARIAN TUMOR DOMAIN-containing deubiquitinating enzyme 3 (234 aa).

Residues 76-234 form the OTU domain; that stretch reads YAVDRVKGDG…SGRNHYDLLR (159 aa). The interval 81 to 87 is cys-loop; it reads VKGDGRC. Aspartate 84 is a catalytic residue. The Nucleophile role is filled by cysteine 87. Residues 154–164 form a variable-loop region; sequence IGRHDFWGGES. The interval 224 to 229 is his-loop; that stretch reads YSGRNH. Residue histidine 229 is part of the active site.

It belongs to the peptidase C85 family.

The catalysed reaction is Thiol-dependent hydrolysis of ester, thioester, amide, peptide and isopeptide bonds formed by the C-terminal Gly of ubiquitin (a 76-residue protein attached to proteins as an intracellular targeting signal).. Its function is as follows. Hydrolase that can remove conjugated ubiquitin from proteins in vitro and may therefore play an important regulatory role at the level of protein turnover by preventing degradation. Cysteine protease with a preference for 'Lys-63' over 'Lys-48' over 'Met-1' -linked ubiquitin (UB) tetramers (e.g. Ub3 and Ub4) as substrates. Also cleaves RUB-GST fusion. This Arabidopsis thaliana (Mouse-ear cress) protein is OVARIAN TUMOR DOMAIN-containing deubiquitinating enzyme 3.